Reading from the N-terminus, the 193-residue chain is Zinc finger protein AZF3 (193 aa).

2 C2H2-type zinc fingers span residues 75–97 (YKCG…KASH) and 118–140 (HVCS…KRCH).

As to expression, expressed in roots.

It is found in the nucleus. Its function is as follows. Transcriptional repressor probably involved in abiotic stress responses. Binds DNA in a sequence-specific manner and can repress the transactivation activity of other transcription factors. The protein is Zinc finger protein AZF3 (AZF3) of Arabidopsis thaliana (Mouse-ear cress).